We begin with the raw amino-acid sequence, 189 residues long: Hypoxanthine/guanine phosphoribosyltransferase (189 aa).

Belongs to the purine/pyrimidine phosphoribosyltransferase family. Archaeal HPRT subfamily. Homodimer.

Its subcellular location is the cytoplasm. The enzyme catalyses IMP + diphosphate = hypoxanthine + 5-phospho-alpha-D-ribose 1-diphosphate. It catalyses the reaction GMP + diphosphate = guanine + 5-phospho-alpha-D-ribose 1-diphosphate. The protein operates within purine metabolism; IMP biosynthesis via salvage pathway; IMP from hypoxanthine: step 1/1. Catalyzes a salvage reaction resulting in the formation of IMP that is energically less costly than de novo synthesis. The sequence is that of Hypoxanthine/guanine phosphoribosyltransferase (hpt) from Methanosarcina acetivorans (strain ATCC 35395 / DSM 2834 / JCM 12185 / C2A).